The chain runs to 177 residues: Large ribosomal subunit protein uL6 (177 aa).

It belongs to the universal ribosomal protein uL6 family. In terms of assembly, part of the 50S ribosomal subunit.

In terms of biological role, this protein binds to the 23S rRNA, and is important in its secondary structure. It is located near the subunit interface in the base of the L7/L12 stalk, and near the tRNA binding site of the peptidyltransferase center. The chain is Large ribosomal subunit protein uL6 from Beijerinckia indica subsp. indica (strain ATCC 9039 / DSM 1715 / NCIMB 8712).